A 361-amino-acid chain; its full sequence is Holliday junction branch migration complex subunit RuvB (361 aa).

The interval 1 to 25 (MSIHTDDFGQGGFAQGGFPPDKAPD) is disordered. The interval 5-207 (TDDFGQGGFA…FGIVARLEFY (203 aa)) is large ATPase domain (RuvB-L). ATP is bound by residues Leu46, Arg47, Gly88, Lys91, Thr92, Thr93, 154–156 (EDY), Arg197, Tyr207, and Arg244. Thr92 contacts Mg(2+). A small ATPAse domain (RuvB-S) region spans residues 208 to 278 (TAEELARIVR…LADRALAMLD (71 aa)). The segment at 281–361 (PQGFDIMDRK…GLPVPGDDAS (81 aa)) is head domain (RuvB-H). DNA-binding residues include Arg336 and Arg341.

It belongs to the RuvB family. Homohexamer. Forms an RuvA(8)-RuvB(12)-Holliday junction (HJ) complex. HJ DNA is sandwiched between 2 RuvA tetramers; dsDNA enters through RuvA and exits via RuvB. An RuvB hexamer assembles on each DNA strand where it exits the tetramer. Each RuvB hexamer is contacted by two RuvA subunits (via domain III) on 2 adjacent RuvB subunits; this complex drives branch migration. In the full resolvosome a probable DNA-RuvA(4)-RuvB(12)-RuvC(2) complex forms which resolves the HJ.

It localises to the cytoplasm. It carries out the reaction ATP + H2O = ADP + phosphate + H(+). The RuvA-RuvB-RuvC complex processes Holliday junction (HJ) DNA during genetic recombination and DNA repair, while the RuvA-RuvB complex plays an important role in the rescue of blocked DNA replication forks via replication fork reversal (RFR). RuvA specifically binds to HJ cruciform DNA, conferring on it an open structure. The RuvB hexamer acts as an ATP-dependent pump, pulling dsDNA into and through the RuvAB complex. RuvB forms 2 homohexamers on either side of HJ DNA bound by 1 or 2 RuvA tetramers; 4 subunits per hexamer contact DNA at a time. Coordinated motions by a converter formed by DNA-disengaged RuvB subunits stimulates ATP hydrolysis and nucleotide exchange. Immobilization of the converter enables RuvB to convert the ATP-contained energy into a lever motion, pulling 2 nucleotides of DNA out of the RuvA tetramer per ATP hydrolyzed, thus driving DNA branch migration. The RuvB motors rotate together with the DNA substrate, which together with the progressing nucleotide cycle form the mechanistic basis for DNA recombination by continuous HJ branch migration. Branch migration allows RuvC to scan DNA until it finds its consensus sequence, where it cleaves and resolves cruciform DNA. The protein is Holliday junction branch migration complex subunit RuvB of Delftia acidovorans (strain DSM 14801 / SPH-1).